The chain runs to 589 residues: Sentrin-specific protease 2 (589 aa).

The short motif at 28 to 31 (KRRR) is the Nuclear localization signal element. Serine 32 is modified (phosphoserine). The short motif at 46 to 51 (PAKRPR) is the Nuclear localization signal element. Residues 71 to 382 (GFPFQLTTKP…EKEISNALGH (312 aa)) form an axin-binding region. Disordered stretches follow at residues 148-179 (SFGF…LMWK) and 191-210 (EESG…GVQK). The Nuclear export signal motif lies at 317-332 (LEPDLSEEVSARLRLG). 2 positions are modified to phosphoserine: serine 333 and serine 344. The segment at 395–559 (LRITRGDIQT…MFTCKYADYI (165 aa)) is protease. Catalysis depends on residues histidine 478 and aspartate 495. Cysteine 548 serves as the catalytic Nucleophile.

Belongs to the peptidase C48 family. In terms of assembly, binds to SUMO2 and SUMO3. Interacts with the C-terminal domain of NUP153 via its N-terminus. Interacts with MTA1. Polyubiquitinated; which leads to proteasomal degradation.

The protein resides in the nucleus. It localises to the nuclear pore complex. Its subcellular location is the nucleus membrane. It is found in the cytoplasm. In terms of biological role, protease that catalyzes two essential functions in the SUMO pathway. The first is the hydrolysis of an alpha-linked peptide bond at the C-terminal end of the small ubiquitin-like modifier (SUMO) propeptides, SUMO1, SUMO2 and SUMO3 leading to the mature form of the proteins. The second is the deconjugation of SUMO1, SUMO2 and SUMO3 from targeted proteins, by cleaving an epsilon-linked peptide bond between the C-terminal glycine of the mature SUMO and the lysine epsilon-amino group of the target protein. May down-regulate CTNNB1 levels and thereby modulate the Wnt pathway. Deconjugates SUMO2 from MTA1. Plays a dynamic role in adipogenesis by desumoylating and promoting the stabilization of CEBPB. Acts as a regulator of the cGAS-STING pathway by catalyzing desumoylation of CGAS and STING1 during the late phase of viral infection. This chain is Sentrin-specific protease 2 (SENP2), found in Pongo abelii (Sumatran orangutan).